The primary structure comprises 208 residues: UPF0637 protein BcerKBAB4_3786 (208 aa).

Belongs to the UPF0637 family.

The sequence is that of UPF0637 protein BcerKBAB4_3786 from Bacillus mycoides (strain KBAB4) (Bacillus weihenstephanensis).